A 367-amino-acid chain; its full sequence is Serine/threonine-protein kinase Sgk2 (367 aa).

The interval 1 to 28 (MASSPVGVPSPQPSRANGNINLGPSANP) is disordered. Position 10 is a phosphoserine (S10). Positions 15-28 (RANGNINLGPSANP) are enriched in polar residues. The 258-residue stretch at 35-292 (FDFLKVIGKG…FLDIKNHMFF (258 aa)) folds into the Protein kinase domain. Residues 41–49 (IGKGNYGKV) and K64 each bind ATP. The short motif at 68 to 77 (KKSILKNKEQ) is the Nuclear localization signal element. D159 acts as the Proton acceptor in catalysis. T193 is modified (phosphothreonine; by PDPK1). The AGC-kinase C-terminal domain occupies 293 to 367 (SPINWDDLYH…AQDDDDILDS (75 aa)). A phosphoserine mark is found at S334 and S356. Y357 is subject to Phosphotyrosine.

The protein belongs to the protein kinase superfamily. AGC Ser/Thr protein kinase family. Activated by phosphorylation on Ser-356 by an unknown kinase (may be mTORC2 but not confirmed), transforming it into a substrate for PDPK1 which then phosphorylates it on Thr-193. Expressed in the proximal tubule and thick ascending limb of the loop of Henle (TALH).

It is found in the cytoplasm. The protein resides in the nucleus. It carries out the reaction L-seryl-[protein] + ATP = O-phospho-L-seryl-[protein] + ADP + H(+). It catalyses the reaction L-threonyl-[protein] + ATP = O-phospho-L-threonyl-[protein] + ADP + H(+). With respect to regulation, two specific sites, one in the kinase domain (Thr-193) and the other in the C-terminal regulatory region (Ser-356), need to be phosphorylated for its full activation. Functionally, serine/threonine-protein kinase which is involved in the regulation of a wide variety of ion channels, membrane transporters, cell growth, survival and proliferation. Up-regulates Na(+) channels: SCNN1A/ENAC, K(+) channels: KCNA3/Kv1.3, KCNE1 and KCNQ1, amino acid transporter: SLC6A19, glutamate transporter: SLC1A6/EAAT4, glutamate receptors: GRIA1/GLUR1 and GRIK2/GLUR6, Na(+)/H(+) exchanger: SLC9A3/NHE3, and the Na(+)/K(+) ATPase. This is Serine/threonine-protein kinase Sgk2 (Sgk2) from Rattus norvegicus (Rat).